Here is a 276-residue protein sequence, read N- to C-terminus: MHPAAEHSPLGKSSEYIATYSPEQLFPIPRTAKWAELGVTAQTLPWQGVDYWNCFELSWLLPSGKPVVAIGEFAIPADSPNIIESKSFKLYLNSLNQTVFTSLGALQVCLEKDLSAAAGKPVGVKVRTLAEVEAQGVVALPGQCIDALDVAISNYEQPQPELLRCNPERVVEETLHSHLLKSNCPVTGQPDWGSVVVQYKGRALDHASLLTYLISFRQHADFHEQCVERIYLDLKNLLQPEHLTVYARYVRRGGLDINPYRSTGPISPDNKRLVRQ.

A substrate-binding site is contributed by 83–85 (IES). 85-86 (SK) is an NADPH binding site. The Thioimide intermediate role is filled by cysteine 184. The Proton donor role is filled by aspartate 191. Substrate is bound at residue 223-224 (HE). 252–253 (RG) serves as a coordination point for NADPH.

This sequence belongs to the GTP cyclohydrolase I family. QueF type 2 subfamily. Homodimer.

The protein resides in the cytoplasm. It catalyses the reaction 7-aminomethyl-7-carbaguanine + 2 NADP(+) = 7-cyano-7-deazaguanine + 2 NADPH + 3 H(+). The protein operates within tRNA modification; tRNA-queuosine biosynthesis. In terms of biological role, catalyzes the NADPH-dependent reduction of 7-cyano-7-deazaguanine (preQ0) to 7-aminomethyl-7-deazaguanine (preQ1). This Pseudomonas putida (strain ATCC 47054 / DSM 6125 / CFBP 8728 / NCIMB 11950 / KT2440) protein is NADPH-dependent 7-cyano-7-deazaguanine reductase.